A 496-amino-acid chain; its full sequence is MLRNSDIKMDFNFLWLILAIFVGTYVVLFGFLRRVNDWYYVSRLGEKRHSLPPGEMGWPLLGNMLSFIRAFRTSDPDTFIYNLVDRYGRTGIYKSHLFWSPSIVVCTPETCKTVLMDNERFGRGNPESTKELLGKKTLGLSNEEHKRLRKLTTNPFRGDKALTMYVGYIEDIVIDLLDEWAGMNKHLVFLTEMRKLAFKVIGHIVFGTTSDHLLELMEKYYTDLLLGLRSPAINIPGFAFYRALKARKLLVKLLQDVLDERKKLSGIEQQKGKKGMIDLLIEAEDENGKKLEDDNIIDLLIINLLAGHESSAHASMWAVLYLYQHPEMLQKAKEEQEEIIKRRPSTQKGLTLEEIKQMEYLSKIIDETMRRTSLFIPIFREAKTDAKIQGYTVPKGWQVLVWTRGVHMDPEVYSNPKEFDPSRWDNHAPKPGSYIPFGGGPWICSGADLTKLEIYIFLHYFLLNYKLELLNPKCPVAYLPVPRPSDNCVAKVVKLK.

A helical membrane pass occupies residues 11-31 (FNFLWLILAIFVGTYVVLFGF). Residue Cys-444 coordinates heme.

It belongs to the cytochrome P450 family. Heme is required as a cofactor.

The protein resides in the membrane. It catalyses the reaction melianol + reduced [NADPH--hemoprotein reductase] + O2 = 7,8-epoxymelianol + oxidized [NADPH--hemoprotein reductase] + H2O + H(+). Its pathway is secondary metabolite biosynthesis; terpenoid biosynthesis. In terms of biological role, monooxygenase involved in the biosynthesis of glabretanes, limonoids and quassinoids triterpene natural products such as ailanthone, chaparrinone, glaucarubinone and amarolide, allelopathic degraded triterpene lactones inhibiting the growth of other plants, and possessing antimalarial, antifeedant, insecticidal, anti-inflammatory and anticancer activities. Catalyzes the epoxidation of melianol to produce 7,8-epoxymelianol. The protein is 7,8-epoxymelianol synthase CYP88A154 of Ailanthus altissima (Tree-of-heaven).